The sequence spans 503 residues: E3 ubiquitin-protein ligase ariadne-1 (503 aa).

A compositionally biased stretch (acidic residues) spans 1–11 (MDSDNDNDFCD). The disordered stretch occupies residues 1 to 40 (MDSDNDNDFCDNVDSGNVSSGDDGDDDFGMEVDLPSSADR). A compositionally biased stretch (low complexity) spans 12-21 (NVDSGNVSSG). The interval 129 to 340 (QCEECEICFS…SSWYNCNRYD (212 aa)) is TRIAD supradomain. Zn(2+) contacts are provided by Cys133, Cys136, Cys150, His152, Cys155, Cys158, Cys178, Cys183, Cys223, Cys228, Cys244, Cys246, Cys251, Cys254, His259, Cys264, Cys291, and Cys294. The RING-type 1 zinc-finger motif lies at 133-183 (CEICFSQLPPDSMAGLECGHRFCMPCWHEYLSTKIVAEGLGQTISCAAHGC). An important for interaction with Ubc10 region spans residues 133–201 (CEICFSQLPP…VANLVTDARV (69 aa)). Residues 203 to 264 (VKYQQLITNS…GENWHDPVKC (62 aa)) form an IBR-type zinc finger. Residues 291–322 (CPRCSVTIEKDGGCNHMVCKNQNCKNEFCWVC) form an RING-type 2; atypical zinc finger. Cys304 is an active-site residue. 6 residues coordinate Zn(2+): Cys309, Cys314, Cys319, Cys322, His329, and Cys336. A coiled-coil region spans residues 341 to 361 (EDEAKTARDAQEKLRSSLARY).

Belongs to the RBR family. Ariadne subfamily. As to quaternary structure, can form homodimers. Interacts (via RING-type 1 zinc finger) with Ubc10. Interacts with the LINC complex member koi. Interacts with park. Interacts with ari-2. Specifically interacts with isoform ECR-A of EcR. Autophosphorylated. As to expression, widely expressed, with prominent levels in the nervous system and female gonads.

It is found in the cytoplasm. It localises to the nucleus. It carries out the reaction [E2 ubiquitin-conjugating enzyme]-S-ubiquitinyl-L-cysteine + [acceptor protein]-L-lysine = [E2 ubiquitin-conjugating enzyme]-L-cysteine + [acceptor protein]-N(6)-ubiquitinyl-L-lysine.. Atypical E3 ubiquitin-protein ligase, which catalyzes ubiquitination of target proteins together with ubiquitin-conjugating enzyme E2 Ubc10. Controls the subcellular localization and morphology of muscle nuclei (myonuclei) by regulating the protein levels and distribution of the LINC (LInker of Nucleoskeleton and Cytoskeleton) complex. Functions by mediating the monoubiquitination of the LINC complex subunit koi leading to its subsequent proteasomal degradation. Appears to function, at least partially redundantly, with the RBR E3 ligase family member park in nuclear localization and morphology. Likely to function in metamorphosis by regulating the proteins levels of EcR isoform A (ECR-A) and its heterodimeric partner usp, via the ubiquitination and subsequent degradation of ECR-A. This Drosophila melanogaster (Fruit fly) protein is E3 ubiquitin-protein ligase ariadne-1.